The sequence spans 225 residues: Heptaprenylglyceryl phosphate synthase (225 aa).

K6 provides a ligand contact to sn-glycerol 1-phosphate. The Mg(2+) site is built by D8 and T34. Residues 153-158, G183, and 203-204 each bind sn-glycerol 1-phosphate; these read YVEYSG and GN.

It belongs to the GGGP/HepGP synthase family. Group I subfamily. Homodimer. Mg(2+) serves as cofactor.

It carries out the reaction sn-glycerol 1-phosphate + all-trans-heptaprenyl diphosphate = 3-heptaprenyl-sn-glycero-1-phosphate + diphosphate. It participates in membrane lipid metabolism; glycerophospholipid metabolism. Functionally, prenyltransferase that catalyzes in vivo the transfer of the heptaprenyl moiety of heptaprenyl pyrophosphate (HepPP; 35 carbon atoms) to the C3 hydroxyl of sn-glycerol-1-phosphate (G1P), producing heptaprenylglyceryl phosphate (HepGP). This reaction is an ether-bond-formation step in the biosynthesis of archaea-type G1P-based membrane lipids found in Bacillales. The chain is Heptaprenylglyceryl phosphate synthase from Listeria monocytogenes serotype 4b (strain CLIP80459).